The following is a 235-amino-acid chain: Small ribosomal subunit protein uS3 (235 aa).

Residues 39 to 107 (VRQFLNKELA…PAQINIAEVK (69 aa)) enclose the KH type-2 domain. Positions 215–226 (AQQPEQQPATPK) are enriched in low complexity. The disordered stretch occupies residues 215 to 235 (AQQPEQQPATPKKAPRGKGRK).

The protein belongs to the universal ribosomal protein uS3 family. In terms of assembly, part of the 30S ribosomal subunit. Forms a tight complex with proteins S10 and S14.

Binds the lower part of the 30S subunit head. Binds mRNA in the 70S ribosome, positioning it for translation. The sequence is that of Small ribosomal subunit protein uS3 from Histophilus somni (strain 129Pt) (Haemophilus somnus).